Reading from the N-terminus, the 530-residue chain is Phosphoenolpyruvate carboxykinase (ATP) (530 aa).

Arginine 58, tyrosine 195, and lysine 201 together coordinate substrate. Residues lysine 201, histidine 220, and 236 to 244 contribute to the ATP site; that span reads GLSGTGKTT. 2 residues coordinate Mn(2+): lysine 201 and histidine 220. Aspartate 257 contacts Mn(2+). ATP-binding positions include glutamate 285, arginine 321, 440–441, and threonine 446; that span reads RI. Arginine 321 is a binding site for substrate.

This sequence belongs to the phosphoenolpyruvate carboxykinase (ATP) family. Mn(2+) is required as a cofactor.

Its subcellular location is the cytoplasm. It carries out the reaction oxaloacetate + ATP = phosphoenolpyruvate + ADP + CO2. It functions in the pathway carbohydrate biosynthesis; gluconeogenesis. Functionally, involved in the gluconeogenesis. Catalyzes the conversion of oxaloacetate (OAA) to phosphoenolpyruvate (PEP) through direct phosphoryl transfer between the nucleoside triphosphate and OAA. The protein is Phosphoenolpyruvate carboxykinase (ATP) of Staphylococcus aureus (strain Mu3 / ATCC 700698).